The following is a 123-amino-acid chain: Protein Wnt-7b (123 aa).

Serine 1 is lipidated: O-palmitoleoyl serine; by PORCN. A disordered linker region spans residues valine 33–threonine 61. A disulfide bridge links cysteine 89 with cysteine 104. A glycan (N-linked (GlcNAc...) asparagine) is linked at asparagine 90.

Belongs to the Wnt family. In terms of processing, palmitoleoylation is required for efficient binding to frizzled receptors. Depalmitoleoylation leads to Wnt signaling pathway inhibition.

It localises to the secreted. The protein localises to the extracellular space. It is found in the extracellular matrix. In terms of biological role, ligand for members of the frizzled family of seven transmembrane receptors that functions in the canonical Wnt/beta-catenin signaling pathway. Required for normal fusion of the chorion and the allantois during placenta development. Required for central nervous system (CNS) angiogenesis and blood-brain barrier regulation. The chain is Protein Wnt-7b (WNT-7B) from Alopias vulpinus (Common thresher shark).